The following is a 414-amino-acid chain: Thyroid hormone receptor beta-B (414 aa).

Positions 1 to 59 are modulating; it reads MPSSMSVRLFTASAAQRKKIQEGDCCVVLAGKTQGRFILIGAVARVSGYIPSYLDKDEL. NR C4-type zinc fingers lie at residues 60–80 and 98–122; these read CVVC…CEGC and CKYE…FKKC. Positions 60–134 form a DNA-binding region, nuclear receptor; that stretch reads CVVCGDKATG…VGMATDLVLD (75 aa). Positions 170 to 414 constitute an NR LBD domain; the sequence is EEWELIQVVT…PPLFLEVFED (245 aa).

The protein belongs to the nuclear hormone receptor family. NR1 subfamily.

It localises to the nucleus. High affinity receptor for triiodothyronine (T3). The polypeptide is Thyroid hormone receptor beta-B (thrb-b) (Xenopus laevis (African clawed frog)).